The following is a 374-amino-acid chain: Ribosomal RNA large subunit methyltransferase G (374 aa).

The protein belongs to the methyltransferase superfamily. RlmG family.

Its subcellular location is the cytoplasm. It catalyses the reaction guanosine(1835) in 23S rRNA + S-adenosyl-L-methionine = N(2)-methylguanosine(1835) in 23S rRNA + S-adenosyl-L-homocysteine + H(+). Specifically methylates the guanine in position 1835 (m2G1835) of 23S rRNA. The polypeptide is Ribosomal RNA large subunit methyltransferase G (Pseudomonas putida (strain ATCC 700007 / DSM 6899 / JCM 31910 / BCRC 17059 / LMG 24140 / F1)).